A 195-amino-acid chain; its full sequence is HTH-type transcriptional regulator BetI (195 aa).

Residues Ser-8–Leu-68 enclose the HTH tetR-type domain. The H-T-H motif DNA-binding region spans Thr-31 to Phe-50.

It functions in the pathway amine and polyamine biosynthesis; betaine biosynthesis via choline pathway [regulation]. Repressor involved in the biosynthesis of the osmoprotectant glycine betaine. It represses transcription of the choline transporter BetT and the genes of BetAB involved in the synthesis of glycine betaine. The polypeptide is HTH-type transcriptional regulator BetI (Escherichia coli O157:H7).